The sequence spans 179 residues: Large ribosomal subunit protein uL6 (179 aa).

It belongs to the universal ribosomal protein uL6 family. As to quaternary structure, part of the 50S ribosomal subunit.

In terms of biological role, this protein binds to the 23S rRNA, and is important in its secondary structure. It is located near the subunit interface in the base of the L7/L12 stalk, and near the tRNA binding site of the peptidyltransferase center. This chain is Large ribosomal subunit protein uL6, found in Koribacter versatilis (strain Ellin345).